The following is a 94-amino-acid chain: uncharacterized protein (94 aa).

Specifically expressed in retina and retinal pigment epithelium.

This is an uncharacterized protein from Homo sapiens (Human).